A 200-amino-acid chain; its full sequence is NAD(P)H dehydrogenase (quinone) (200 aa).

One can recognise a Flavodoxin-like domain in the interval 4 to 191 (VLVLYYSSYG…GGARYQGALV (188 aa)). FMN-binding positions include 10-15 (SSYGHI) and 79-81 (TRF). Tyr-12 lines the NAD(+) pocket. Trp-99 contacts substrate. FMN is bound by residues 114-120 (STASQHG) and His-135.

Belongs to the WrbA family. The cofactor is FMN.

It catalyses the reaction a quinone + NADH + H(+) = a quinol + NAD(+). It carries out the reaction a quinone + NADPH + H(+) = a quinol + NADP(+). This is NAD(P)H dehydrogenase (quinone) from Rhodospirillum centenum (strain ATCC 51521 / SW).